We begin with the raw amino-acid sequence, 552 residues long: CTP synthase (552 aa).

The interval 1-265 (MTKYIFITGG…DEIVVRKLRL (265 aa)) is amidoligase domain. Ser-13 provides a ligand contact to CTP. Position 13 (Ser-13) interacts with UTP. Residues 14–19 (SLGKGI) and Asp-71 each bind ATP. The Mg(2+) site is built by Asp-71 and Glu-139. CTP contacts are provided by residues 146–148 (DIE), 186–191 (KTKPTQ), and Lys-222. UTP-binding positions include 186-191 (KTKPTQ) and Lys-222. The Glutamine amidotransferase type-1 domain maps to 290–541 (TVAMVGKYVN…VRAARARSEG (252 aa)). Gly-351 lines the L-glutamine pocket. Residue Cys-378 is the Nucleophile; for glutamine hydrolysis of the active site. Residues 379-382 (LGMQ), Glu-402, and Arg-469 each bind L-glutamine. Active-site residues include His-514 and Glu-516.

Belongs to the CTP synthase family. Homotetramer.

The enzyme catalyses UTP + L-glutamine + ATP + H2O = CTP + L-glutamate + ADP + phosphate + 2 H(+). It catalyses the reaction L-glutamine + H2O = L-glutamate + NH4(+). It carries out the reaction UTP + NH4(+) + ATP = CTP + ADP + phosphate + 2 H(+). It functions in the pathway pyrimidine metabolism; CTP biosynthesis via de novo pathway; CTP from UDP: step 2/2. Its activity is regulated as follows. Allosterically activated by GTP, when glutamine is the substrate; GTP has no effect on the reaction when ammonia is the substrate. The allosteric effector GTP functions by stabilizing the protein conformation that binds the tetrahedral intermediate(s) formed during glutamine hydrolysis. Inhibited by the product CTP, via allosteric rather than competitive inhibition. Catalyzes the ATP-dependent amination of UTP to CTP with either L-glutamine or ammonia as the source of nitrogen. Regulates intracellular CTP levels through interactions with the four ribonucleotide triphosphates. The sequence is that of CTP synthase from Methylococcus capsulatus (strain ATCC 33009 / NCIMB 11132 / Bath).